The primary structure comprises 315 residues: Vomeronasal type-1 receptor 54 (315 aa).

Over 1-15 (MNKMNRLSHNTEIRN) the chain is Extracellular. A helical transmembrane segment spans residues 16–40 (AIYSGVGIGISGNSFLLLFHIFKYI). The Cytoplasmic portion of the chain corresponds to 41–51 (RGQRSRHIDLP). Residues 52-71 (IGLLSLIHLVMLIAMSLVAT) traverse the membrane as a helical segment. Topologically, residues 72–90 (DIFMPWGRWGDTTCKCVIS) are extracellular. Cys85 and Cys172 form a disulfide bridge. A helical membrane pass occupies residues 91–112 (LYRFCRSLSLCATSLLSILQAV). Over 113-132 (TLNPRNSCLEKFKRKSPHYM) the chain is Cytoplasmic. A helical membrane pass occupies residues 133 to 154 (LGCLLFLSVFYTFISSPLATYI). Over 155 to 193 (TAKSNLTSPSFTYITTSCSLAPMSYSFHLTVFILLTSRD) the chain is Extracellular. The helical transmembrane segment at 194 to 212 (VIFVGLMLLSSGYMVTFLG) threads the bilayer. At 213–239 (RHKKQSQFLHITSFSLKPSAEKRAMRT) the chain is on the cytoplasmic side. The chain crosses the membrane as a helical span at residues 240–260 (ILCLMSFFVLMYTLDSIVSYI). At 261 to 267 (RSIDDGQ) the chain is on the extracellular side. Residues 268–288 (IFYCVHIFTAHGYATVSPFLI) form a helical membrane-spanning segment. The Cytoplasmic portion of the chain corresponds to 289–315 (LSTEKYIINIFRSTFGRMVTIILLRNR).

It belongs to the G-protein coupled receptor 1 family.

The protein localises to the cell membrane. In terms of biological role, putative pheromone receptor implicated in the regulation of social and reproductive behavior. The polypeptide is Vomeronasal type-1 receptor 54 (Vmn1r54) (Mus musculus (Mouse)).